Consider the following 151-residue polypeptide: Ribonuclease H (151 aa).

The RNase H type-1 domain maps to 1 to 143 (MSDVVVIHTD…ADVLATRGLQ (143 aa)). Mg(2+) contacts are provided by Asp10, Glu49, Asp71, and Asp135.

This sequence belongs to the RNase H family. Monomer. Mg(2+) serves as cofactor.

It is found in the cytoplasm. The enzyme catalyses Endonucleolytic cleavage to 5'-phosphomonoester.. Endonuclease that specifically degrades the RNA of RNA-DNA hybrids. This Mycolicibacterium gilvum (strain PYR-GCK) (Mycobacterium gilvum (strain PYR-GCK)) protein is Ribonuclease H.